A 460-amino-acid polypeptide reads, in one-letter code: Xyloglucan 6-xylosyltransferase 1 (460 aa).

Over 1-20 (MIEKCIGAHRFRRLQRFMRQ) the chain is Cytoplasmic. Residues 21 to 40 (GKVTILCLVLTVIVLRGTIG) traverse the membrane as a helical; Signal-anchor for type II membrane protein segment. Residues 41–460 (AGKFGTPEKD…KAAKLSTTTT (420 aa)) lie on the Lumenal side of the membrane. Residues glycine 156 and 227–229 (DSD) each bind UDP-alpha-D-xylose. Aspartate 227 and aspartate 229 together coordinate Mn(2+). Position 346 (histidine 346) interacts with substrate. The UDP-alpha-D-xylose site is built by histidine 377, glycine 380, and lysine 382. Histidine 377 provides a ligand contact to Mn(2+). Residues lysine 382 and 389–390 (DY) each bind substrate. N-linked (GlcNAc...) asparagine glycosylation occurs at asparagine 431.

Belongs to the glycosyltransferase 34 family. As to quaternary structure, forms homodimer. Interacts with XXT2. Requires Mn(2+) as cofactor.

Its subcellular location is the golgi apparatus membrane. It catalyses the reaction Transfers an alpha-D-xylosyl residue from UDP-D-xylose to a glucose residue in xyloglucan, forming an alpha-(1-&gt;6)-D-xylosyl-D-glucose linkage.. Its pathway is protein modification; protein glycosylation. In terms of biological role, xylosyltransferase specific to UDP-D-xylose that accepts both cellopentaose and cellohexaose as substrates, with a better use of cellohexaose, to produce xyloglucan. Adds preferentially the first xylosyl residue to the fourth glucosyl residue from the reducing end of both acceptors. Transfer one xylose mainly to the second glucose residue from the non-reducing end. The acceptor should have a minimum of four glucose residues. This is Xyloglucan 6-xylosyltransferase 1 from Arabidopsis thaliana (Mouse-ear cress).